A 524-amino-acid polypeptide reads, in one-letter code: Citrate exporter 1 (524 aa).

The segment at 1–49 (MSSTTSSSRSDLEKVPVPQVTPRDSDSDKGSLSPEPSTLEAQSSEKPPH) is disordered. Over residues 34 to 45 (PEPSTLEAQSSE) the composition is skewed to polar residues. A helical membrane pass occupies residues 60 to 80 (MVCIVSLAAIFSPLSSNIYFP). A glycan (N-linked (GlcNAc...) asparagine) is linked at Asn90. 5 consecutive transmembrane segments (helical) span residues 95 to 115 (LATL…SFWG), 125 to 145 (PVFI…AESK), 155 to 175 (ALQA…IGDI), 186 to 206 (GIFG…GGIF), and 215 to 235 (IFWF…VLLP). Residue Asn244 is glycosylated (N-linked (GlcNAc...) asparagine). A run of 6 helical transmembrane segments spans residues 296–316 (VFIT…VTSS), 332–352 (IGLT…LVGY), 395–415 (TWWV…SLRT), 417–437 (LAVP…LFTI), 459–479 (LMRC…LDAL), and 481–501 (PDYT…LLYV).

Belongs to the major facilitator superfamily.

It localises to the cell membrane. The catalysed reaction is citrate(in) = citrate(out). Functionally, transmembrane transporter that exports citrate across the cell membrane. In Aspergillus niger (strain ATCC 1015 / CBS 113.46 / FGSC A1144 / LSHB Ac4 / NCTC 3858a / NRRL 328 / USDA 3528.7), this protein is Citrate exporter 1.